A 119-amino-acid chain; its full sequence is Large ribosomal subunit protein bL19 (119 aa).

It belongs to the bacterial ribosomal protein bL19 family.

This protein is located at the 30S-50S ribosomal subunit interface and may play a role in the structure and function of the aminoacyl-tRNA binding site. This is Large ribosomal subunit protein bL19 from Sulfurovum sp. (strain NBC37-1).